The primary structure comprises 355 residues: Anthranilate phosphoribosyltransferase (355 aa).

5-phospho-alpha-D-ribose 1-diphosphate is bound by residues glycine 102, 105 to 106, serine 110, 112 to 115, 130 to 138, and serine 142; these read GD, NIST, and KHGNRSVSS. Glycine 102 lines the anthranilate pocket. Serine 114 is a binding site for Mg(2+). Asparagine 133 lines the anthranilate pocket. An anthranilate-binding site is contributed by arginine 188. Mg(2+)-binding residues include aspartate 246 and glutamate 247.

Belongs to the anthranilate phosphoribosyltransferase family. In terms of assembly, homodimer. The cofactor is Mg(2+).

It catalyses the reaction N-(5-phospho-beta-D-ribosyl)anthranilate + diphosphate = 5-phospho-alpha-D-ribose 1-diphosphate + anthranilate. Its pathway is amino-acid biosynthesis; L-tryptophan biosynthesis; L-tryptophan from chorismate: step 2/5. Catalyzes the transfer of the phosphoribosyl group of 5-phosphorylribose-1-pyrophosphate (PRPP) to anthranilate to yield N-(5'-phosphoribosyl)-anthranilate (PRA). The chain is Anthranilate phosphoribosyltransferase from Pectobacterium atrosepticum (strain SCRI 1043 / ATCC BAA-672) (Erwinia carotovora subsp. atroseptica).